A 518-amino-acid polypeptide reads, in one-letter code: Retinal dehydrogenase 2 (518 aa).

Residues 184 to 186 (IPW), 210 to 213 (KPAE), and 264 to 266 (STE) each bind NAD(+). Catalysis depends on glutamate 286, which acts as the Proton acceptor. Cysteine 320 functions as the Nucleophile in the catalytic mechanism. NAD(+)-binding positions include 366–370 (KQYNK) and glutamate 417.

Belongs to the aldehyde dehydrogenase family. Homotetramer.

The protein localises to the cytoplasm. The catalysed reaction is retinal + NAD(+) + H2O = retinoate + NADH + 2 H(+). It catalyses the reaction all-trans-retinal + NAD(+) + H2O = all-trans-retinoate + NADH + 2 H(+). The enzyme catalyses all-trans-13,14-dihydroretinal + NAD(+) + H2O = all-trans-13,14-dihydroretinoate + NADH + 2 H(+). It participates in cofactor metabolism; retinol metabolism. Its function is as follows. Catalyzes the NAD-dependent oxidation of aldehyde substrates, such as all-trans-retinal and all-trans-13,14-dihydroretinal, to their corresponding carboxylic acids, all-trans-retinoate and all-trans-13,14-dihydroretinoate, respectively. Retinoate signaling is critical for the transcriptional control of many genes, for instance it is crucial for initiation of meiosis in both male and female. Recognizes retinal as substrate, both in its free form and when bound to cellular retinol-binding protein. Lacks activity with benzaldehyde, acetaldehyde and octanal. Displays complete lack of activity with citral. The polypeptide is Retinal dehydrogenase 2 (ALDH1A2) (Gallus gallus (Chicken)).